The sequence spans 61 residues: UPF0434 protein MS0934 (61 aa).

Belongs to the UPF0434 family.

This is UPF0434 protein MS0934 from Mannheimia succiniciproducens (strain KCTC 0769BP / MBEL55E).